We begin with the raw amino-acid sequence, 90 residues long: Small ribosomal subunit protein bS20 (90 aa).

A disordered region spans residues 1–25 (MANSPSAKKRAKQAEKRRSHNASLR). The segment covering 7 to 20 (AKKRAKQAEKRRSH) has biased composition (basic residues).

The protein belongs to the bacterial ribosomal protein bS20 family.

Its function is as follows. Binds directly to 16S ribosomal RNA. The chain is Small ribosomal subunit protein bS20 from Pseudomonas fluorescens (strain Pf0-1).